Reading from the N-terminus, the 64-residue chain is Large ribosomal subunit protein bL35 (64 aa).

Positions 1-28 are disordered; it reads MPKVKTKSGAKKRFKLTGSGKIKRKSAY.

The protein belongs to the bacterial ribosomal protein bL35 family.

This chain is Large ribosomal subunit protein bL35, found in Cytophaga hutchinsonii (strain ATCC 33406 / DSM 1761 / CIP 103989 / NBRC 15051 / NCIMB 9469 / D465).